Consider the following 536-residue polypeptide: Phosphoenolpyruvate carboxykinase (ATP) (536 aa).

Positions 61, 195, and 201 each coordinate substrate. ATP is bound by residues lysine 201, histidine 220, and 236-244 (GLSGTGKTT). Mn(2+)-binding residues include lysine 201 and histidine 220. A Mn(2+)-binding site is contributed by aspartate 257. ATP-binding residues include glutamate 285, arginine 322, and threonine 447. Arginine 322 is a substrate binding site.

It belongs to the phosphoenolpyruvate carboxykinase (ATP) family. Mn(2+) serves as cofactor.

It localises to the cytoplasm. The catalysed reaction is oxaloacetate + ATP = phosphoenolpyruvate + ADP + CO2. Its pathway is carbohydrate biosynthesis; gluconeogenesis. In terms of biological role, involved in the gluconeogenesis. Catalyzes the conversion of oxaloacetate (OAA) to phosphoenolpyruvate (PEP) through direct phosphoryl transfer between the nucleoside triphosphate and OAA. In Brucella anthropi (strain ATCC 49188 / DSM 6882 / CCUG 24695 / JCM 21032 / LMG 3331 / NBRC 15819 / NCTC 12168 / Alc 37) (Ochrobactrum anthropi), this protein is Phosphoenolpyruvate carboxykinase (ATP).